The following is a 452-amino-acid chain: Type II methyltransferase M.EcaI (452 aa).

Belongs to the N(4)/N(6)-methyltransferase family.

The enzyme catalyses a 2'-deoxyadenosine in DNA + S-adenosyl-L-methionine = an N(6)-methyl-2'-deoxyadenosine in DNA + S-adenosyl-L-homocysteine + H(+). A beta subtype methylase, recognizes the double-stranded sequence 5'-GGTNACC-3', methylates A-5 on both strands and protects the DNA from cleavage by the EcaI endonuclease. The protein is Type II methyltransferase M.EcaI (ecaIM) of Enterobacter cloacae.